A 165-amino-acid chain; its full sequence is Chaperone protein SicA (165 aa).

It belongs to the LcrH/SycD chaperone family. In terms of assembly, dimer or higher-order oligomers.

It is found in the cytoplasm. Functionally, type III secretion-associated chaperone required for SipB and SipC stabilization. Prevents premature association of SipB with SipC, which may lead to their targeting for degradation. Along with InvF, required for transcription activation of sigDE (sopB pipC), sicAsipBCDA, and sopE. This chain is Chaperone protein SicA (sicA), found in Salmonella dublin.